We begin with the raw amino-acid sequence, 124 residues long: Small ribosomal subunit protein uS13 (124 aa).

The segment at 96–124 (LPVRGQRTKTNARTRKGPRRTVAGKKKAK) is disordered.

It belongs to the universal ribosomal protein uS13 family. As to quaternary structure, part of the 30S ribosomal subunit. Forms a loose heterodimer with protein S19. Forms two bridges to the 50S subunit in the 70S ribosome.

In terms of biological role, located at the top of the head of the 30S subunit, it contacts several helices of the 16S rRNA. In the 70S ribosome it contacts the 23S rRNA (bridge B1a) and protein L5 of the 50S subunit (bridge B1b), connecting the 2 subunits; these bridges are implicated in subunit movement. Contacts the tRNAs in the A and P-sites. This chain is Small ribosomal subunit protein uS13, found in Symbiobacterium thermophilum (strain DSM 24528 / JCM 14929 / IAM 14863 / T).